A 256-amino-acid chain; its full sequence is D-aminoacyl-tRNA deacylase (256 aa).

The protein belongs to the DtdA deacylase family. In terms of assembly, monomer. Requires Zn(2+) as cofactor.

It carries out the reaction a D-aminoacyl-tRNA + H2O = a tRNA + a D-alpha-amino acid + H(+). The enzyme catalyses glycyl-tRNA(Ala) + H2O = tRNA(Ala) + glycine + H(+). Its function is as follows. D-aminoacyl-tRNA deacylase with broad substrate specificity. By recycling D-aminoacyl-tRNA to D-amino acids and free tRNA molecules, this enzyme counteracts the toxicity associated with the formation of D-aminoacyl-tRNA entities in vivo. This Thermoplasma acidophilum (strain ATCC 25905 / DSM 1728 / JCM 9062 / NBRC 15155 / AMRC-C165) protein is D-aminoacyl-tRNA deacylase.